The following is a 2711-amino-acid chain: Chromodomain-helicase-DNA-binding protein 6 (2711 aa).

Composition is skewed to basic and acidic residues over residues 1 to 12 (MKMKIQKKEKQL), 100 to 115 (EPGE…DREP), 122 to 151 (EPKE…DGVK), and 158 to 171 (EASG…KRSC). Disordered regions lie at residues 1–52 (MKMK…EEAA) and 66–243 (EEAD…QVKR). A required for DNA-dependent ATPase activity region spans residues 1–746 (MKMKIQKKEK…MMELRKCCNH (746 aa)). Over residues 214–224 (SLPNPSLQSPE) the composition is skewed to low complexity. 2 Chromo domains span residues 291–342 (NIIE…KDPR) and 374–438 (IEID…KHVE). One can recognise a Helicase ATP-binding domain in the interval 472 to 646 (LFNWYNRKNC…FSLLNFLEPS (175 aa)). 485 to 492 (DEMGLGKT) provides a ligand contact to ATP. The DEAH box motif lies at 597–600 (DEAH). Residues 786–955 (LIDKLLPKLI…LSKMEVEDLL (170 aa)) form the Helicase C-terminal domain. The disordered stretch occupies residues 1318–1389 (SLSAEQGVTD…SDPDKSPWPV (72 aa)). Positions 1320 to 1329 (SAEQGVTDGT) are enriched in polar residues. The span at 1332-1350 (IPERGNIDKEDSAEDKLDG) shows a compositional bias: basic and acidic residues. Residues 1448-1502 (RWTRREQADFYRTVSSFGVVYDQEKKAFDWTQFRIISRLDKKSDESLEHYFYSFV) form the Myb-like domain. Residue S1865 is modified to Phosphoserine. Disordered stretches follow at residues 1951-1978 (SEDS…TVEG), 1997-2059 (EPWK…ASGI), 2124-2147 (LPTP…ATEH), 2321-2350 (TTLS…QAEK), 2373-2419 (GFGT…RGFL), 2550-2602 (SASL…ITTS), and 2641-2711 (RHSE…EDTN). Residues 2017 to 2036 (SEPKPEDMDFENKDDYEKDG) are compositionally biased toward basic and acidic residues. Composition is skewed to low complexity over residues 2130–2140 (SSSAGSRSSLS) and 2333–2349 (ATSS…SQAE). Over residues 2550-2563 (SASLASTKSGTSAT) the composition is skewed to low complexity. The segment covering 2565-2586 (KSTEDKLSGHDVNTDALVDDKP) has biased composition (basic and acidic residues). Polar residues-rich tracts occupy residues 2591 to 2602 (FSDQSEPTITTS) and 2677 to 2688 (SDQNCTESSATV). The span at 2690-2711 (PEREHVAQAREEGLKDSNEDTN) shows a compositional bias: basic and acidic residues.

This sequence belongs to the SNF2/RAD54 helicase family. As to quaternary structure, interacts with NFE2L2; involved in activation of the transcription. Widely expressed.

It localises to the nucleus. The protein localises to the nucleoplasm. It catalyses the reaction ATP + H2O = ADP + phosphate + H(+). Functionally, ATP-dependent chromatin-remodeling factor. Regulates transcription by disrupting nucleosomes in a largely non-sliding manner which strongly increases the accessibility of chromatin. Activates transcription of specific genes in response to oxidative stress through interaction with NFE2L2. The polypeptide is Chromodomain-helicase-DNA-binding protein 6 (Chd6) (Mus musculus (Mouse)).